Consider the following 132-residue polypeptide: Ribosome-binding factor A (132 aa).

Belongs to the RbfA family. As to quaternary structure, monomer. Binds 30S ribosomal subunits, but not 50S ribosomal subunits or 70S ribosomes.

The protein localises to the cytoplasm. Its function is as follows. One of several proteins that assist in the late maturation steps of the functional core of the 30S ribosomal subunit. Associates with free 30S ribosomal subunits (but not with 30S subunits that are part of 70S ribosomes or polysomes). Required for efficient processing of 16S rRNA. May interact with the 5'-terminal helix region of 16S rRNA. This Pseudomonas putida (strain GB-1) protein is Ribosome-binding factor A.